We begin with the raw amino-acid sequence, 61 residues long: UPF0181 protein KPN78578_22920 (61 aa).

Belongs to the UPF0181 family.

The protein is UPF0181 protein KPN78578_22920 of Klebsiella pneumoniae subsp. pneumoniae (strain ATCC 700721 / MGH 78578).